A 681-amino-acid chain; its full sequence is PTS system glucose-specific EIICBA component (681 aa).

The 412-residue stretch at 3–414 folds into the PTS EIIC type-1 domain; sequence KKLFGQLQRI…LKYKTPGRED (412 aa). 10 consecutive transmembrane segments (helical) span residues 16-36, 73-93, 126-146, 170-190, 199-219, 273-293, 303-323, 328-348, 355-375, and 383-403; these read LMLP…GTAM, MIFA…AAIA, ILGI…GALA, FVPI…ALIW, AFST…FGFI, FMQG…LAIY, VVAG…ITEP, FLFV…LSFL, LHLG…GILP, and VIPV…FLIV. The PTS EIIB type-1 domain occupies 425–506; that stretch reads TELPYAVLEA…QQIMNGQVVE (82 aa). Cys447 functions as the Phosphocysteine intermediate; for EIIB activity in the catalytic mechanism. The 105-residue stretch at 551–655 folds into the PTS EIIA type-1 domain; the sequence is DQVFSEKMMG…SDITPIIVTQ (105 aa). Catalysis depends on His603, which acts as the Tele-phosphohistidine intermediate; for EIIA activity.

It is found in the cell membrane. The enzyme catalyses N(pros)-phospho-L-histidyl-[protein] + D-glucose(out) = D-glucose 6-phosphate(in) + L-histidyl-[protein]. Functionally, the phosphoenolpyruvate-dependent sugar phosphotransferase system (sugar PTS), a major carbohydrate active transport system, catalyzes the phosphorylation of incoming sugar substrates concomitantly with their translocation across the cell membrane. This system is involved in glucose transport. The polypeptide is PTS system glucose-specific EIICBA component (ptsG) (Staphylococcus aureus (strain MRSA252)).